Here is a 106-residue protein sequence, read N- to C-terminus: Integration host factor subunit beta (106 aa).

The disordered stretch occupies residues 57–106 (PARAGRNPRTGEHVPVEQKSVPFFKTGKEMRERLNRDGLDGATPPSPPAA). A compositionally biased stretch (basic and acidic residues) spans 82–95 (TGKEMRERLNRDGL).

This sequence belongs to the bacterial histone-like protein family. In terms of assembly, heterodimer of an alpha and a beta chain.

Its function is as follows. This protein is one of the two subunits of integration host factor, a specific DNA-binding protein that functions in genetic recombination as well as in transcriptional and translational control. This chain is Integration host factor subunit beta, found in Afipia carboxidovorans (strain ATCC 49405 / DSM 1227 / KCTC 32145 / OM5) (Oligotropha carboxidovorans).